The primary structure comprises 353 residues: Alternative oxidase, mitochondrial (353 aa).

The interval 25-45 (FRSTDDEDENNPSTELATDTT) is disordered. Over residues 35-45 (NPSTELATDTT) the composition is skewed to polar residues. The chain crosses the membrane as a helical span at residues 153-173 (FLFLESIAGVPGMVAGMIRHL). The Fe cation site is built by Glu157, Glu196, and His199. The helical transmembrane segment at 217–237 (LLIGQIIFYNLFFISYLISPA) threads the bilayer. Fe cation contacts are provided by Glu247, Glu301, and His304.

The protein belongs to the alternative oxidase family. It depends on Fe cation as a cofactor.

It is found in the mitochondrion inner membrane. Functionally, catalyzes cyanide-resistant oxygen consumption. May increase respiration when the cytochrome respiratory pathway is restricted, or in response to low temperatures. The protein is Alternative oxidase, mitochondrial (AOX) of Yarrowia lipolytica (strain CLIB 122 / E 150) (Yeast).